The chain runs to 292 residues: Zinc finger protein OZF (292 aa).

C2H2-type zinc fingers lie at residues 16–38 (FACK…EHFH), 44–66 (FECN…QNTH), 72–94 (LECN…QKIH), 100–122 (FECK…QRTH), 128–150 (FICK…EKIH), 156–178 (FKCN…QNIH), 184–206 (YECN…VRIH), 212–234 (YECN…VRSH), 240–262 (YGCN…LRIH), and 268–290 (YQCS…QKIH). Glycyl lysine isopeptide (Lys-Gly) (interchain with G-Cter in SUMO2) cross-links involve residues lysine 28, lysine 51, and lysine 56. Glycyl lysine isopeptide (Lys-Gly) (interchain with G-Cter in SUMO) cross-links involve residues lysine 157 and lysine 169. Residue lysine 173 forms a Glycyl lysine isopeptide (Lys-Gly) (interchain with G-Cter in SUMO2) linkage. An interaction with TERF2IP region spans residues 212-292 (YECNVCGKAF…HIRHQKIHTH (81 aa)).

It belongs to the krueppel C2H2-type zinc-finger protein family. In terms of assembly, binds DNA. Interacts with SUMO conjugating enzyme UBC9/UBE2I. Interacts with the telomeric protein TERF2IP.

The protein resides in the nucleus. The polypeptide is Zinc finger protein OZF (ZNF146) (Bos taurus (Bovine)).